A 408-amino-acid polypeptide reads, in one-letter code: Cytotoxic granule-associated RNA binding protein tiar-1 (408 aa).

RRM domains follow at residues 46 to 121 (RTLY…WAVE), 135 to 213 (FHVF…WATR), and 241 to 312 (TSVY…WGKT).

As to expression, expressed in the germline and also in somatic tissues. Expressed in Ggonads and oocytes. Expression is slightly reduced in the most proximal oocytes, especially the -1 oocyte. Aggregates mostly in the head neurons, muscles, intestine, vulval and hypodermal cells during heat shock. Expressed only in the intestine as a response to heat shock, starvation and dietary restriction.

Its subcellular location is the cytoplasm. The protein localises to the nucleus. It is found in the stress granule. Functionally, acts downstream of ced-9 in the induction of germline apoptosis under different stress conditions including starvation, osmotic, oxidative, heat shock and UV stress. Plays a role in the formation of stress granules in response to heat shock and oxidative stress but not in response to osmotic stress. Required for the formation of stress granules in the core gonad but may not play a critical role in this process in the oocytes. Plays an important role in the formation of stress granules in the embryo. Protects female germ cells and embryos from heat shock. The protein is Cytotoxic granule-associated RNA binding protein tiar-1 of Caenorhabditis elegans.